We begin with the raw amino-acid sequence, 37 residues long: Cytochrome b6-f complex subunit 5 (37 aa).

A helical transmembrane segment spans residues 5–25; sequence LLSGIVLGLIPVTLAGLFVTA.

The protein belongs to the PetG family. The 4 large subunits of the cytochrome b6-f complex are cytochrome b6, subunit IV (17 kDa polypeptide, PetD), cytochrome f and the Rieske protein, while the 4 small subunits are PetG, PetL, PetM and PetN. The complex functions as a dimer.

The protein localises to the plastid. The protein resides in the chloroplast thylakoid membrane. Functionally, component of the cytochrome b6-f complex, which mediates electron transfer between photosystem II (PSII) and photosystem I (PSI), cyclic electron flow around PSI, and state transitions. PetG is required for either the stability or assembly of the cytochrome b6-f complex. The polypeptide is Cytochrome b6-f complex subunit 5 (Chlorokybus atmophyticus (Soil alga)).